The chain runs to 751 residues: Photosystem I P700 chlorophyll a apoprotein A1 (751 aa).

The next 8 membrane-spanning stretches (helical) occupy residues 73–96 (VFSA…FHGA), 159–182 (LYST…FHFH), 198–222 (LNHH…HVSL), 294–312 (TAHH…GHMY), 349–372 (WHAQ…HHQY), 388–414 (LSLF…IFMI), 436–458 (AIIS…LYIH), and 533–551 (FLVH…LILL). [4Fe-4S] cluster-binding residues include Cys575 and Cys584. The next 2 membrane-spanning stretches (helical) occupy residues 591–612 (HVFL…HFSW) and 665–687 (LSAY…MFLF). His676 lines the chlorophyll a' pocket. Chlorophyll a is bound by residues Met684 and Tyr692. Residue Trp693 participates in phylloquinone binding. The helical transmembrane segment at 725–745 (AVGVAHYLLGGIATTWSFFLA) threads the bilayer.

It belongs to the PsaA/PsaB family. In terms of assembly, the PsaA/B heterodimer binds the P700 chlorophyll special pair and subsequent electron acceptors. PSI consists of a core antenna complex that captures photons, and an electron transfer chain that converts photonic excitation into a charge separation. The eukaryotic PSI reaction center is composed of at least 11 subunits. Requires P700 is a chlorophyll a/chlorophyll a' dimer, A0 is one or more chlorophyll a, A1 is one or both phylloquinones and FX is a shared 4Fe-4S iron-sulfur center. as cofactor.

The protein localises to the plastid. Its subcellular location is the chloroplast thylakoid membrane. The catalysed reaction is reduced [plastocyanin] + hnu + oxidized [2Fe-2S]-[ferredoxin] = oxidized [plastocyanin] + reduced [2Fe-2S]-[ferredoxin]. In terms of biological role, psaA and PsaB bind P700, the primary electron donor of photosystem I (PSI), as well as the electron acceptors A0, A1 and FX. PSI is a plastocyanin/cytochrome c6-ferredoxin oxidoreductase, converting photonic excitation into a charge separation, which transfers an electron from the donor P700 chlorophyll pair to the spectroscopically characterized acceptors A0, A1, FX, FA and FB in turn. Oxidized P700 is reduced on the lumenal side of the thylakoid membrane by plastocyanin or cytochrome c6. The sequence is that of Photosystem I P700 chlorophyll a apoprotein A1 from Tupiella akineta (Green alga).